The primary structure comprises 20 residues: Unknown protein NF042 from 2D-PAGE (20 aa).

This is Unknown protein NF042 from 2D-PAGE from Naegleria fowleri (Brain eating amoeba).